Consider the following 182-residue polypeptide: ATP-dependent protease subunit HslV (182 aa).

The active site involves Thr7. 3 residues coordinate Na(+): Gly162, Cys165, and Thr168.

Belongs to the peptidase T1B family. HslV subfamily. A double ring-shaped homohexamer of HslV is capped on each side by a ring-shaped HslU homohexamer. The assembly of the HslU/HslV complex is dependent on binding of ATP.

The protein resides in the cytoplasm. It catalyses the reaction ATP-dependent cleavage of peptide bonds with broad specificity.. Allosterically activated by HslU binding. Protease subunit of a proteasome-like degradation complex believed to be a general protein degrading machinery. This is ATP-dependent protease subunit HslV from Legionella pneumophila (strain Lens).